A 170-amino-acid polypeptide reads, in one-letter code: Heat shock protein beta-7 (170 aa).

The tract at residues 1–39 (MSHRTSSTFRAERSFHSSSSSSSSSTSSSASRALPAQDP) is disordered. Residues 1 to 71 (MSHRTSSTFR…PLAFPARPGG (71 aa)) form a required for localization to SC35 splicing speckles region. Residues 16 to 31 (HSSSSSSSSSTSSSAS) are compositionally biased toward low complexity. Positions 62–170 (PLAFPARPGG…QQTFRTEIKI (109 aa)) constitute a sHSP domain.

This sequence belongs to the small heat shock protein (HSP20) family. In terms of assembly, interacts with C-terminal domain of actin-binding protein 280. As to expression, isoform 1 is highly expressed in adult and fetal heart, skeletal muscle, and at a much lower levels in adipose tissue and in aorta. Undetectable in other tissues. Isoform 2 and isoform 3 are poorly detected in heart.

It is found in the cytoplasm. The protein localises to the nucleus. The protein resides in the cajal body. The protein is Heat shock protein beta-7 (HSPB7) of Homo sapiens (Human).